Reading from the N-terminus, the 243-residue chain is 1-(5-phosphoribosyl)-5-[(5-phosphoribosylamino)methylideneamino] imidazole-4-carboxamide isomerase (243 aa).

Asp-8 (proton acceptor) is an active-site residue. Asp-129 (proton donor) is an active-site residue.

This sequence belongs to the HisA/HisF family.

It is found in the cytoplasm. The enzyme catalyses 1-(5-phospho-beta-D-ribosyl)-5-[(5-phospho-beta-D-ribosylamino)methylideneamino]imidazole-4-carboxamide = 5-[(5-phospho-1-deoxy-D-ribulos-1-ylimino)methylamino]-1-(5-phospho-beta-D-ribosyl)imidazole-4-carboxamide. The protein operates within amino-acid biosynthesis; L-histidine biosynthesis; L-histidine from 5-phospho-alpha-D-ribose 1-diphosphate: step 4/9. This is 1-(5-phosphoribosyl)-5-[(5-phosphoribosylamino)methylideneamino] imidazole-4-carboxamide isomerase from Citrifermentans bemidjiense (strain ATCC BAA-1014 / DSM 16622 / JCM 12645 / Bem) (Geobacter bemidjiensis).